A 529-amino-acid polypeptide reads, in one-letter code: Beta-galactoside alpha-2,6-sialyltransferase 2 (529 aa).

The Cytoplasmic portion of the chain corresponds to 1 to 11; that stretch reads MKPHLKQWRQR. Residues 12 to 32 form a helical; Signal-anchor for type II membrane protein membrane-spanning segment; sequence MLFGIFAWGLLFLLIFIYFTD. The Lumenal segment spans residues 33–529; the sequence is SNPAEPVPSS…PAPSPVIPHS (497 aa). A glycan (O-linked (GalNAc...) serine) is linked at serine 69. Asparagine 211 carries N-linked (GlcNAc...) asparagine glycosylation. 3 cysteine pairs are disulfide-bonded: cysteine 253/cysteine 519, cysteine 296/cysteine 448, and cysteine 466/cysteine 477.

It belongs to the glycosyltransferase 29 family. O-glycosylated. In terms of tissue distribution, weakly expressed in some tissues, such as small intestine, colon and fetal brain.

It localises to the golgi apparatus. Its subcellular location is the golgi stack membrane. The enzyme catalyses a beta-D-galactoside + CMP-N-acetyl-beta-neuraminate = an N-acetyl-alpha-neuraminyl-(2-&gt;6)-beta-D-galactosyl derivative + CMP + H(+). Transfers sialic acid from the donor of substrate CMP-sialic acid to galactose containing acceptor substrates. Has alpha-2,6-sialyltransferase activity toward oligosaccharides that have the Gal-beta-1,4-GlcNAc sequence at the non-reducing end of their carbohydrate groups, but it has weak or no activities toward glycoproteins and glycolipids. In Homo sapiens (Human), this protein is Beta-galactoside alpha-2,6-sialyltransferase 2 (ST6GAL2).